The chain runs to 229 residues: Enolase-phosphatase E1 (229 aa).

This sequence belongs to the HAD-like hydrolase superfamily. MasA/MtnC family. In terms of assembly, monomer. Requires Mg(2+) as cofactor.

It catalyses the reaction 5-methylsulfanyl-2,3-dioxopentyl phosphate + H2O = 1,2-dihydroxy-5-(methylsulfanyl)pent-1-en-3-one + phosphate. Its pathway is amino-acid biosynthesis; L-methionine biosynthesis via salvage pathway; L-methionine from S-methyl-5-thio-alpha-D-ribose 1-phosphate: step 3/6. It participates in amino-acid biosynthesis; L-methionine biosynthesis via salvage pathway; L-methionine from S-methyl-5-thio-alpha-D-ribose 1-phosphate: step 4/6. Its function is as follows. Bifunctional enzyme that catalyzes the enolization of 2,3-diketo-5-methylthiopentyl-1-phosphate (DK-MTP-1-P) into the intermediate 2-hydroxy-3-keto-5-methylthiopentenyl-1-phosphate (HK-MTPenyl-1-P), which is then dephosphorylated to form the acireductone 1,2-dihydroxy-3-keto-5-methylthiopentene (DHK-MTPene). This Citrobacter koseri (strain ATCC BAA-895 / CDC 4225-83 / SGSC4696) protein is Enolase-phosphatase E1.